The primary structure comprises 532 residues: Membrane protein insertase YidC (532 aa).

Helical transmembrane passes span 6–26 (IVLAIILSLVVFLGWHSFAEY), 317–337 (AIDFGMFSIIAKPLLTALTFF), 342–362 (GNWGVAIIVLTLCIKIVFWPL), 411–431 (GGCLPILLQIPVFIGLYQALL), 451–473 (VWLADLSAADPFYITPLLMGASM), and 496–516 (PIIFTVMFLNFPAGLVIYWLF).

It belongs to the OXA1/ALB3/YidC family. Type 1 subfamily. As to quaternary structure, interacts with the Sec translocase complex via SecD. Specifically interacts with transmembrane segments of nascent integral membrane proteins during membrane integration.

It is found in the cell membrane. Functionally, required for the insertion and/or proper folding and/or complex formation of integral membrane proteins into the membrane. Involved in integration of membrane proteins that insert both dependently and independently of the Sec translocase complex, as well as at least some lipoproteins. Aids folding of multispanning membrane proteins. This Lawsonia intracellularis (strain PHE/MN1-00) protein is Membrane protein insertase YidC.